We begin with the raw amino-acid sequence, 220 residues long: Pyridoxine/pyridoxamine 5'-phosphate oxidase (220 aa).

Residues 49–54, 68–69, Lys-75, and Gln-97 contribute to the FMN site; these read RMVLLK and YT. Position 54 (Lys-54) interacts with substrate. Residues Tyr-115, Arg-119, and Ser-123 each contribute to the substrate site. FMN contacts are provided by residues 132-133 and Trp-176; that span reads QS. 182–184 is a binding site for substrate; it reads RLH. Arg-186 is a binding site for FMN.

Belongs to the pyridoxamine 5'-phosphate oxidase family. Homodimer. Requires FMN as cofactor.

It carries out the reaction pyridoxamine 5'-phosphate + O2 + H2O = pyridoxal 5'-phosphate + H2O2 + NH4(+). The catalysed reaction is pyridoxine 5'-phosphate + O2 = pyridoxal 5'-phosphate + H2O2. It functions in the pathway cofactor metabolism; pyridoxal 5'-phosphate salvage; pyridoxal 5'-phosphate from pyridoxamine 5'-phosphate: step 1/1. The protein operates within cofactor metabolism; pyridoxal 5'-phosphate salvage; pyridoxal 5'-phosphate from pyridoxine 5'-phosphate: step 1/1. In terms of biological role, catalyzes the oxidation of either pyridoxine 5'-phosphate (PNP) or pyridoxamine 5'-phosphate (PMP) into pyridoxal 5'-phosphate (PLP). This chain is Pyridoxine/pyridoxamine 5'-phosphate oxidase, found in Paracoccus denitrificans (strain Pd 1222).